Here is a 520-residue protein sequence, read N- to C-terminus: DEP domain-containing protein 7 (520 aa).

One can recognise a DEP domain in the interval 45 to 137 (ALTQVEVKKR…SSCSLYRFIN (93 aa)). The tract at residues 148-167 (KSNGRCTPQRPKHSSFQSAP) is disordered.

Belongs to the DEPDC7 family.

This chain is DEP domain-containing protein 7 (depdc7), found in Xenopus tropicalis (Western clawed frog).